Consider the following 337-residue polypeptide: Holliday junction branch migration complex subunit RuvB (337 aa).

The tract at residues 4–184 is large ATPase domain (RuvB-L); the sequence is ADRLIEPIAS…FGIVQRLEFY (181 aa). ATP contacts are provided by residues Ile-23, Arg-24, Gly-65, Lys-68, Thr-69, Thr-70, 131 to 133, Arg-174, Tyr-184, and Arg-221; that span reads EDY. Residue Thr-69 coordinates Mg(2+). The small ATPAse domain (RuvB-S) stretch occupies residues 185 to 255; that stretch reads NVADLSTIVS…TAAAALDMLE (71 aa). The tract at residues 258 to 337 is head domain (RuvB-H); that stretch reads SEGFDIMDRK…FGITKDQTKD (80 aa). DNA contacts are provided by Arg-294, Arg-313, and Arg-318.

Belongs to the RuvB family. As to quaternary structure, homohexamer. Forms an RuvA(8)-RuvB(12)-Holliday junction (HJ) complex. HJ DNA is sandwiched between 2 RuvA tetramers; dsDNA enters through RuvA and exits via RuvB. An RuvB hexamer assembles on each DNA strand where it exits the tetramer. Each RuvB hexamer is contacted by two RuvA subunits (via domain III) on 2 adjacent RuvB subunits; this complex drives branch migration. In the full resolvosome a probable DNA-RuvA(4)-RuvB(12)-RuvC(2) complex forms which resolves the HJ.

It localises to the cytoplasm. It carries out the reaction ATP + H2O = ADP + phosphate + H(+). Its function is as follows. The RuvA-RuvB-RuvC complex processes Holliday junction (HJ) DNA during genetic recombination and DNA repair, while the RuvA-RuvB complex plays an important role in the rescue of blocked DNA replication forks via replication fork reversal (RFR). RuvA specifically binds to HJ cruciform DNA, conferring on it an open structure. The RuvB hexamer acts as an ATP-dependent pump, pulling dsDNA into and through the RuvAB complex. RuvB forms 2 homohexamers on either side of HJ DNA bound by 1 or 2 RuvA tetramers; 4 subunits per hexamer contact DNA at a time. Coordinated motions by a converter formed by DNA-disengaged RuvB subunits stimulates ATP hydrolysis and nucleotide exchange. Immobilization of the converter enables RuvB to convert the ATP-contained energy into a lever motion, pulling 2 nucleotides of DNA out of the RuvA tetramer per ATP hydrolyzed, thus driving DNA branch migration. The RuvB motors rotate together with the DNA substrate, which together with the progressing nucleotide cycle form the mechanistic basis for DNA recombination by continuous HJ branch migration. Branch migration allows RuvC to scan DNA until it finds its consensus sequence, where it cleaves and resolves cruciform DNA. The sequence is that of Holliday junction branch migration complex subunit RuvB from Colwellia psychrerythraea (strain 34H / ATCC BAA-681) (Vibrio psychroerythus).